A 127-amino-acid chain; its full sequence is Large ribosomal subunit protein bL17 (127 aa).

The protein belongs to the bacterial ribosomal protein bL17 family. As to quaternary structure, part of the 50S ribosomal subunit. Contacts protein L32.

The polypeptide is Large ribosomal subunit protein bL17 (Xanthomonas oryzae pv. oryzae (strain KACC10331 / KXO85)).